We begin with the raw amino-acid sequence, 110 residues long: Bowman-Birk type proteinase inhibitor (110 aa).

Residues 1–19 (MVVLKVCLVLLFLVGGTTS) form the signal peptide. Positions 20–39 (ANLRLSKLGLLMKSDHQHSN) are excised as a propeptide. Cystine bridges form between Cys47–Cys101, Cys48–Cys63, Cys51–Cys97, Cys53–Cys61, Cys71–Cys78, Cys75–Cys90, and Cys80–Cys88.

This sequence belongs to the Bowman-Birk serine protease inhibitor family.

Inhibitor of trypsin and of chymotrypsin. The protein is Bowman-Birk type proteinase inhibitor of Glycine max (Soybean).